The following is a 1021-amino-acid chain: Collagen alpha-1(I) chain (1021 aa).

The interval 1-1021 is disordered; that stretch reads DEKSAGGISV…PGPPGPPGPP (1021 aa). The residue at position 3 (K3) is an Allysine. S4 carries the phosphoserine modification. A 4-hydroxyproline mark is found at P23, P26, P29, P38, P41, P44, P59, P74, P80, P89, and P95. Low complexity predominate over residues 31-50; that stretch reads PQGFQGPPGEPGEPGASGPM. Residues 62–76 show a composition bias toward basic and acidic residues; that stretch reads NGDDGEAGKPGRPGE. The residue at position 98 (K98) is a 5-hydroxylysine; alternate. The O-linked (Gal...) hydroxylysine; alternate glycan is linked to K98. S104 carries the post-translational modification Phosphoserine. A compositionally biased stretch (low complexity) spans 112 to 128; it reads DAGPAGPKGEPGSPGEN. P122, P125, P131, P140, P146, P167, P176, P179, P206, P209, P221, P227, P236, P242, P245, and P260 each carry 4-hydroxyproline. A compositionally biased stretch (low complexity) spans 146 to 164; that stretch reads PGASGPAGARGNDGATGAA. The span at 166–178 shows a compositional bias: pro residues; the sequence is PPGPTGPAGPPGF. Low complexity predominate over residues 212–262; it reads AGAAGPAGNPGADGQPGAKGANGAPGIAGAPGFPGARGPSGPQGPSGAPGP. 5-hydroxylysine is present on K263. A 4-hydroxyproline mark is found at P269, P272, P284, P293, P308, P314, P323, and P329. Gly residues predominate over residues 318-327; it reads GERGGPGSRG. K338 carries the 5-hydroxylysine modification. 28 positions are modified to 4-hydroxyproline: P347, P356, P362, P368, P377, P380, P389, P398, P404, P416, P425, P434, P437, P455, P472, P478, P484, P490, P496, P502, P514, P523, P534, P546, P549, P555, P561, and P570. Positions 371 to 425 are enriched in low complexity; sequence KGLTGSPGSPGPDGKTGPPGPAGQDGRPGPAGPPGARGQAGVMGFPGPKGAAGEP. Over residues 484-493 the composition is skewed to low complexity; sequence PGEAGKPGEQ. Residues 536–558 show a composition bias toward low complexity; sequence NDGAKGDAGAPGAPGSQGAPGLQ. K582 carries the 5-hydroxylysine modification. 4-hydroxyproline occurs at positions 588 and 603. The span at 615-629 shows a compositional bias: low complexity; the sequence is AGPSGPAGPTGARGA. S618 is subject to Phosphoserine. 7 positions are modified to 4-hydroxyproline: P630, P636, P639, P648, P654, P681, and P690. Residues 642-672 are compositionally biased toward low complexity; sequence AGFAGPPGADGQPGAKGEPGDAGAKGDAGPS. K693 carries the post-translational modification 5-hydroxylysine. Residues 698–714 show a composition bias toward low complexity; that stretch reads SAGPPGATGFPGAAGRV. Residues P702 and P708 each carry the 4-hydroxyproline modification. Residue P716 is modified to 3-hydroxyproline. A 4-hydroxyproline mark is found at P717, P726, P729, P750, P759, P768, P777, P794, P803, P806, P812, P827, P833, P839, P848, and P854. A compositionally biased stretch (low complexity) spans 743–752; the sequence is ETGPAGRPGE. The segment covering 762-777 has biased composition (low complexity); it reads SGEKGSPGADGPAGAP. The span at 826-836 shows a compositional bias: pro residues; sequence PPGPMGPPGLA. Over residues 838–853 the composition is skewed to low complexity; the sequence is PPGEAGREGSPGAEGS. K863 bears the 5-hydroxylysine mark. Residues 871-886 are compositionally biased toward pro residues; sequence PGPPGAPGAPGAPGPV. 4-hydroxyproline is present on residues P874, P877, and P880. Residues 907-921 show a composition bias toward low complexity; sequence AGPAGARGPAGPQGP. A compositionally biased stretch (basic and acidic residues) spans 922–936; that stretch reads RGDKGETGEQGDRGI. K925 is modified (5-hydroxylysine). K937 carries the 5-hydroxylysine; alternate modification. O-linked (Gal...) hydroxylysine; alternate glycosylation occurs at K937. P952, P955, P973, and P988 each carry 4-hydroxyproline. Low complexity predominate over residues 955–988; it reads PGEQGPSGASGPAGPRGPPGSAGTPGKDGLNGLP. The residue at position 993 (P993) is a 3-hydroxyproline. Residue P994 is modified to 4-hydroxyproline. The segment covering 1006-1021 has biased composition (pro residues); that stretch reads VGPPGPPGPPGPPGPP. 3-hydroxyproline is present on P1008. Residue P1009 is modified to 4-hydroxyproline. At P1011 the chain carries 3-hydroxyproline. At P1012 the chain carries 4-hydroxyproline. P1014 is subject to 3-hydroxyproline. P1015, P1018, and P1021 each carry 4-hydroxyproline.

It belongs to the fibrillar collagen family. Trimers of one alpha 2(I) and two alpha 1(I) chains. Contains mostly 4-hydroxyproline. Proline residues at the third position of the tripeptide repeating unit (G-X-Y) are hydroxylated in some or all of the chains. Post-translationally, contains 3-hydroxyproline at a few sites. This modification occurs on the first proline residue in the sequence motif Gly-Pro-Hyp, where Hyp is 4-hydroxyproline. In terms of processing, lysine residues at the third position of the tripeptide repeating unit (G-X-Y) are 5-hydroxylated in some or all of the chains. O-glycosylated on hydroxylated lysine residues. The O-linked glycan consists of a Glc-Gal disaccharide. As to expression, expressed in bones.

Its subcellular location is the secreted. It localises to the extracellular space. It is found in the extracellular matrix. In terms of biological role, type I collagen is a member of group I collagen (fibrillar forming collagen). This chain is Collagen alpha-1(I) chain, found in Doedicurus sp. (South American giant glyptodont).